We begin with the raw amino-acid sequence, 293 residues long: Elongation factor Ts (293 aa).

The tract at residues 80-83 (TDFV) is involved in Mg(2+) ion dislocation from EF-Tu.

Belongs to the EF-Ts family.

The protein localises to the cytoplasm. Associates with the EF-Tu.GDP complex and induces the exchange of GDP to GTP. It remains bound to the aminoacyl-tRNA.EF-Tu.GTP complex up to the GTP hydrolysis stage on the ribosome. The protein is Elongation factor Ts of Burkholderia vietnamiensis (strain G4 / LMG 22486) (Burkholderia cepacia (strain R1808)).